We begin with the raw amino-acid sequence, 128 residues long: Putative protein SEM1, isoform 2 (128 aa).

The span at 22–32 (KHGIKRGRRPS) shows a compositional bias: basic residues. Residues 22 to 42 (KHGIKRGRRPSIRSPAQRARG) form a disordered region.

This chain is Putative protein SEM1, isoform 2, found in Homo sapiens (Human).